Reading from the N-terminus, the 429-residue chain is DNA primase DnaG (429 aa).

Positions 172–246 (DSIIVVEGRN…DVDFIARAPP (75 aa)) constitute a Toprim domain. Residues Glu178, Asp220, and Asp222 each coordinate Mg(2+). Residues 287–322 (RNTKELEERQGNELKNERPEKINENEESEKNVELKE) are disordered.

It belongs to the archaeal DnaG primase family. Forms a ternary complex with MCM helicase and DNA. Component of the archaeal exosome complex. The cofactor is Mg(2+).

The catalysed reaction is ssDNA + n NTP = ssDNA/pppN(pN)n-1 hybrid + (n-1) diphosphate.. Functionally, RNA polymerase that catalyzes the synthesis of short RNA molecules used as primers for DNA polymerase during DNA replication. Also part of the exosome, which is a complex involved in RNA degradation. Acts as a poly(A)-binding protein that enhances the interaction between heteromeric, adenine-rich transcripts and the exosome. This Picrophilus torridus (strain ATCC 700027 / DSM 9790 / JCM 10055 / NBRC 100828 / KAW 2/3) protein is DNA primase DnaG.